A 159-amino-acid polypeptide reads, in one-letter code: SsrA-binding protein (159 aa).

This sequence belongs to the SmpB family.

It is found in the cytoplasm. Its function is as follows. Required for rescue of stalled ribosomes mediated by trans-translation. Binds to transfer-messenger RNA (tmRNA), required for stable association of tmRNA with ribosomes. tmRNA and SmpB together mimic tRNA shape, replacing the anticodon stem-loop with SmpB. tmRNA is encoded by the ssrA gene; the 2 termini fold to resemble tRNA(Ala) and it encodes a 'tag peptide', a short internal open reading frame. During trans-translation Ala-aminoacylated tmRNA acts like a tRNA, entering the A-site of stalled ribosomes, displacing the stalled mRNA. The ribosome then switches to translate the ORF on the tmRNA; the nascent peptide is terminated with the 'tag peptide' encoded by the tmRNA and targeted for degradation. The ribosome is freed to recommence translation, which seems to be the essential function of trans-translation. The polypeptide is SsrA-binding protein (Salinispora tropica (strain ATCC BAA-916 / DSM 44818 / JCM 13857 / NBRC 105044 / CNB-440)).